A 153-amino-acid chain; its full sequence is Putative nuclear shuttle protein (153 aa).

The protein belongs to the nanoviridae nuclear shuttle protein family.

It localises to the host nucleus. The protein resides in the host cytoplasm. In terms of biological role, putative nuclear shuttle protein. This chain is Putative nuclear shuttle protein (DNA-N), found in Trifolium subterraneum (Subterranean clover).